A 256-amino-acid polypeptide reads, in one-letter code: DNA repair protein RecO (256 aa).

The protein belongs to the RecO family.

Its function is as follows. Involved in DNA repair and RecF pathway recombination. This Bartonella henselae (strain ATCC 49882 / DSM 28221 / CCUG 30454 / Houston 1) (Rochalimaea henselae) protein is DNA repair protein RecO.